We begin with the raw amino-acid sequence, 476 residues long: POC1 centriolar protein homolog B (476 aa).

7 WD repeats span residues 16–55 (GHKAAITSADFSPNCKQIATASWDTFLMLWSLKPHARAYR), 58–97 (GHKDVVTSLQFSPQGNLLASASRDRTVRLWVLDRKGKSSE), 100–139 (AHTAPVRSVDFSADGQLLVTASEDKSIKVWSMFRQRFLYS), 142–181 (RHTHWVRCAKFSPDGRLIVSCSEDKTIKIWDTTNKQCVNN), 183–223 (SDSV…LLQH), 226–265 (VHSCGVNCLSFHPLGNSLVTASSDGTVKMLDLIEGRLIYT), and 268–307 (GHTGPVFTVSFSKDGELLTSGGADAQVLIWRTNFIHLHCK). Residues 429–468 (ALEHIMEQLNILTQTVSILEQRLSLTEDKLRDCLENQQKL) are a coiled coil.

Belongs to the WD repeat POC1 family. Interacts with POC1A. Interacts with FAM161A. Interacts with CEP44; the interaction is direct and recruits POC1B to centriolar microtubules. Forms a microtubule-associated complex with POC5, CETN2 and FAM161A. Interacts with CCDC15. Post-translationally, phosphorylated in mitotic cells that may be mediated by CDK1. As to expression, expressed in the retina.

The protein resides in the cytoplasm. It localises to the cytoskeleton. It is found in the microtubule organizing center. The protein localises to the centrosome. Its subcellular location is the centriole. The protein resides in the cilium basal body. It localises to the spindle pole. Functionally, plays an important role in centriole assembly and/or stability and ciliogenesis. Involved in early steps of centriole duplication, as well as in the later steps of centriole length control. Acts in concert with POC1A to ensure centriole integrity and proper mitotic spindle formation. Required for primary cilia formation, ciliary length and also cell proliferation. Required for retinal integrity. Acts as a positive regulator of centriole elongation. This Mus musculus (Mouse) protein is POC1 centriolar protein homolog B (Poc1b).